We begin with the raw amino-acid sequence, 229 residues long: Cytidylate kinase (229 aa).

12-20 contacts ATP; that stretch reads GPSGSGKGT.

This sequence belongs to the cytidylate kinase family. Type 1 subfamily.

It localises to the cytoplasm. The catalysed reaction is CMP + ATP = CDP + ADP. It carries out the reaction dCMP + ATP = dCDP + ADP. This is Cytidylate kinase from Stutzerimonas stutzeri (strain A1501) (Pseudomonas stutzeri).